The chain runs to 499 residues: Pentatricopeptide repeat-containing protein At5g61800 (499 aa).

10 PPR repeats span residues 78–113 (STFC…SVPP), 114–150 (DFHT…GLLS), 151–181 (DLFT…NPQR), 182–212 (DVVT…MPLR), 213–247 (DLVS…GLKP), 248–282 (DNVA…RLFI), 283–313 (DSFL…CSDK), 314–348 (TLFT…GIKP), 349–379 (DGVT…MRSL), and 385–419 (EMKH…GGNR). A type E motif region spans residues 424–499 (AWSGLLGGCR…KNVGFSKVLS (76 aa)).

The protein belongs to the PPR family. PCMP-E subfamily.

The chain is Pentatricopeptide repeat-containing protein At5g61800 (PCMP-E8) from Arabidopsis thaliana (Mouse-ear cress).